A 247-amino-acid chain; its full sequence is Pulmonary surfactant-associated protein A (247 aa).

An N-terminal signal peptide occupies residues 1–19 (MWCSLALILILVTVSGIMC). The N-linked (GlcNAc...) asparagine glycan is linked to N20. Positions 27 to 99 (GSPGIPGTPG…PGERGPPGLP (73 aa)) constitute a Collagen-like domain. A 4-hydroxyproline mark is found at P29, P32, P35, P41, P53, P56, P62, P66, and P69. The tract at residues 32–101 (PGTPGSHGLP…ERGPPGLPAS (70 aa)) is disordered. Positions 41–50 (PGRDGRDGVK) are enriched in basic and acidic residues. A compositionally biased stretch (pro residues) spans 53–64 (PGPPGPMGPPGV). Positions 83–92 (ERGDKGDPGE) are enriched in basic and acidic residues. Positions 131–247 (LAVGDKVFAT…LQSRLTICEF (117 aa)) constitute a C-type lectin domain. Cystine bridges form between C154/C245 and C223/C237. N-linked (GlcNAc...) asparagine glycosylation is present at N206. Ca(2+)-binding residues include E214, R216, N233, and D234.

Belongs to the SFTPA family. As to quaternary structure, oligomeric complex of 6 set of homotrimers.

The protein localises to the secreted. It localises to the extracellular space. The protein resides in the extracellular matrix. It is found in the surface film. Functionally, in presence of calcium ions, it binds to surfactant phospholipids and contributes to lower the surface tension at the air-liquid interface in the alveoli of the mammalian lung and is essential for normal respiration. Enhances the expression of MYO18A/SP-R210 on alveolar macrophages. This Cavia porcellus (Guinea pig) protein is Pulmonary surfactant-associated protein A (SFTPA1).